The sequence spans 156 residues: Nuclear cap-binding protein subunit 2 (156 aa).

The residue at position 2 (Ser2) is an N-acetylserine. Phosphoserine is present on residues Ser13 and Ser18. Residues Tyr20, Tyr43, 112–116 (RTDWD), 123–127 (RQYGR), and 133–134 (QV) contribute to the mRNA site. Residues 40 to 118 (CTLYVGNLSF…RIIRTDWDAG (79 aa)) enclose the RRM domain. Residues 124-156 (QYGRGRSGGQVRDEYRQDYDAGRGGYGKLAQNQ) form a disordered region. Positions 134 to 144 (VRDEYRQDYDA) are enriched in basic and acidic residues. Arg146 is modified (omega-N-methylarginine).

It belongs to the RRM NCBP2 family. Component of the nuclear cap-binding complex (CBC), a heterodimer composed of NCBP1/CBP80 and NCBP2/CBP20 that interacts with m7GpppG-capped RNA. Found in a U snRNA export complex with PHAX/RNUXA, NCBP1/CBP80, NCBP2/CBP20, RAN, XPO1 and m7G-capped RNA. Interacts with PHAX/RNUXA, EIF4G1, HNRNPF, HNRNPH1 and ALYREF/THOC4/ALY. Interacts with SRRT/ARS2 and KPNA3.

The protein localises to the nucleus. It is found in the cytoplasm. Component of the cap-binding complex (CBC), which binds co-transcriptionally to the 5' cap of pre-mRNAs and is involved in various processes such as pre-mRNA splicing, translation regulation, nonsense-mediated mRNA decay, RNA-mediated gene silencing (RNAi) by microRNAs (miRNAs) and mRNA export. The CBC complex is involved in mRNA export from the nucleus via its interaction with ALYREF/THOC4/ALY, leading to the recruitment of the mRNA export machinery to the 5' end of mRNA and to mRNA export in a 5' to 3' direction through the nuclear pore. The CBC complex is also involved in mediating U snRNA and intronless mRNAs export from the nucleus. The CBC complex is essential for a pioneer round of mRNA translation, before steady state translation when the CBC complex is replaced by cytoplasmic cap-binding protein eIF4E. The pioneer round of mRNA translation mediated by the CBC complex plays a central role in nonsense-mediated mRNA decay (NMD), NMD only taking place in mRNAs bound to the CBC complex, but not on eIF4E-bound mRNAs. The CBC complex enhances NMD in mRNAs containing at least one exon-junction complex (EJC) via its interaction with UPF1, promoting the interaction between UPF1 and UPF2. The CBC complex is also involved in 'failsafe' NMD, which is independent of the EJC complex, while it does not participate in Staufen-mediated mRNA decay (SMD). During cell proliferation, the CBC complex is also involved in microRNAs (miRNAs) biogenesis via its interaction with SRRT/ARS2, thereby being required for miRNA-mediated RNA interference. The CBC complex also acts as a negative regulator of PARN, thereby acting as an inhibitor of mRNA deadenylation. In the CBC complex, NCBP2/CBP20 recognizes and binds capped RNAs (m7GpppG-capped RNA) but requires NCBP1/CBP80 to stabilize the movement of its N-terminal loop and lock the CBC into a high affinity cap-binding state with the cap structure. The conventional cap-binding complex with NCBP2 binds both small nuclear RNA (snRNA) and messenger (mRNA) and is involved in their export from the nucleus. This Bos taurus (Bovine) protein is Nuclear cap-binding protein subunit 2 (NCBP2).